The primary structure comprises 324 residues: Serpentine receptor class gamma-10 (324 aa).

8 consecutive transmembrane segments (helical) span residues 39–59 (SSYLIVGAVLNVMIVYTVFHG), 69–89 (MLYCADAIVGIYINTAEVIFG), 91–111 (IFIYITPLCPIASPYFFTPSI), 128–146 (TFSQIFMSFNRMTCVIFLM), 155–175 (ILKPVLIITFILPLGVIWKIL), 206–226 (LFHFTLCFVLVIIFFVATILG), 246–266 (MIMAVQTVTFASIQIYFVFFA), and 279–299 (IVSFVFDSLYVFSPIALIVMS).

Belongs to the nematode receptor-like protein srg family.

The protein resides in the membrane. The chain is Serpentine receptor class gamma-10 (srg-10) from Caenorhabditis elegans.